The sequence spans 130 residues: Small ribosomal subunit protein uS8 (130 aa).

It belongs to the universal ribosomal protein uS8 family. As to quaternary structure, part of the 30S ribosomal subunit. Contacts proteins S5 and S12.

In terms of biological role, one of the primary rRNA binding proteins, it binds directly to 16S rRNA central domain where it helps coordinate assembly of the platform of the 30S subunit. This chain is Small ribosomal subunit protein uS8, found in Hahella chejuensis (strain KCTC 2396).